The chain runs to 89 residues: Small ribosomal subunit protein uS15 (89 aa).

This sequence belongs to the universal ribosomal protein uS15 family. Part of the 30S ribosomal subunit. Forms a bridge to the 50S subunit in the 70S ribosome, contacting the 23S rRNA.

One of the primary rRNA binding proteins, it binds directly to 16S rRNA where it helps nucleate assembly of the platform of the 30S subunit by binding and bridging several RNA helices of the 16S rRNA. Functionally, forms an intersubunit bridge (bridge B4) with the 23S rRNA of the 50S subunit in the ribosome. The polypeptide is Small ribosomal subunit protein uS15 (Thermosynechococcus vestitus (strain NIES-2133 / IAM M-273 / BP-1)).